We begin with the raw amino-acid sequence, 64 residues long: MLILTRRVGETLMIGDDVTVTVLGVKGNQVRIGVNAPKDVSVHREEIYERIKKEQQAGPEHDSD.

The protein belongs to the CsrA/RsmA family. In terms of assembly, homodimer; the beta-strands of each monomer intercalate to form a hydrophobic core, while the alpha-helices form wings that extend away from the core.

It localises to the cytoplasm. A key translational regulator that binds mRNA to regulate translation initiation and/or mRNA stability. Mediates global changes in gene expression, shifting from rapid growth to stress survival by linking envelope stress, the stringent response and the catabolite repression systems. Usually binds in the 5'-UTR; binding at or near the Shine-Dalgarno sequence prevents ribosome-binding, repressing translation, binding elsewhere in the 5'-UTR can activate translation and/or stabilize the mRNA. Its function is antagonized by small RNA(s). The chain is Translational regulator CsrA from Methylococcus capsulatus (strain ATCC 33009 / NCIMB 11132 / Bath).